The following is a 394-amino-acid chain: ILCPLEAFIVQHILTISVMGLLSCFRSTVLRKCSKGSSGMSRFLYTNNFQRNLISSGGNESYYGYFNRRSYTSLYMGTGTVGGITSARIRVPNVGCEGFMCSSHLSITQRNSRLIHSTSKIVPNSEIQNITTEMVKTPEVSRWMDQVIPTIAPCDAAEPWQLGFQDAATPIMQGIIDLHHDIFFFVIQIGVFVSWVLLRALWHFRSKMNPIPQRIVHGTTIEILWTIFPSVILMFIAIPSFALLYSMDDIVVDPAITIKAIGHQWYWTYEYSDYNNSDEQSLAFDSYMIPEDDLELGQLRLLEVDNRVVVPAKTHLRVIITSADVLHSWAVPSLGVKCDAVPGRLNQISTFIQREGVYYGQCSEICGTNHAFMPIVIEAVSTKDYGSWVSSQVN.

A mitochondrion-targeting transit peptide spans 1-119; that stretch reads ILCPLEAFIV…RNSRLIHSTS (119 aa). The Mitochondrial intermembrane segment spans residues 120–181; the sequence is KIVPNSEIQN…MQGIIDLHHD (62 aa). The helical transmembrane segment at 182 to 198 threads the bilayer; the sequence is IFFFVIQIGVFVSWVLL. Over 199–226 the chain is Mitochondrial matrix; sequence RALWHFRSKMNPIPQRIVHGTTIEILWT. The chain crosses the membrane as a helical span at residues 227–243; it reads IFPSVILMFIAIPSFAL. Residues 244-394 are Mitochondrial intermembrane-facing; the sequence is LYSMDDIVVD…YGSWVSSQVN (151 aa). Residues His327, Cys362, Glu364, Cys366, His370, and Met373 each contribute to the Cu cation site. Glu364 provides a ligand contact to Mg(2+).

It belongs to the cytochrome c oxidase subunit 2 family. Component of the cytochrome c oxidase (complex IV, CIV), a multisubunit enzyme composed of a catalytic core of 3 subunits and several supernumerary subunits. The complex exists as a monomer or a dimer and forms supercomplexes (SCs) in the inner mitochondrial membrane with ubiquinol-cytochrome c oxidoreductase (cytochrome b-c1 complex, complex III, CIII). Cu cation serves as cofactor.

It localises to the mitochondrion inner membrane. The enzyme catalyses 4 Fe(II)-[cytochrome c] + O2 + 8 H(+)(in) = 4 Fe(III)-[cytochrome c] + 2 H2O + 4 H(+)(out). Functionally, component of the cytochrome c oxidase, the last enzyme in the mitochondrial electron transport chain which drives oxidative phosphorylation. The respiratory chain contains 3 multisubunit complexes succinate dehydrogenase (complex II, CII), ubiquinol-cytochrome c oxidoreductase (cytochrome b-c1 complex, complex III, CIII) and cytochrome c oxidase (complex IV, CIV), that cooperate to transfer electrons derived from NADH and succinate to molecular oxygen, creating an electrochemical gradient over the inner membrane that drives transmembrane transport and the ATP synthase. Cytochrome c oxidase is the component of the respiratory chain that catalyzes the reduction of oxygen to water. Electrons originating from reduced cytochrome c in the intermembrane space (IMS) are transferred via the dinuclear copper A center (CU(A)) of subunit 2 and heme A of subunit 1 to the active site in subunit 1, a binuclear center (BNC) formed by heme A3 and copper B (CU(B)). The BNC reduces molecular oxygen to 2 water molecules using 4 electrons from cytochrome c in the IMS and 4 protons from the mitochondrial matrix. This is Cytochrome c oxidase subunit 2, mitochondrial (COX2) from Glycine max (Soybean).